The chain runs to 683 residues: MSSGTMKFNGYLRVRIGEAVGLQPTRWSLRHSLFKKGHQLLDPYLTVSVDQVRVGQTSTKQKTNKPTYNEEFCTNVSDGGHLELAVFHETPLGYDHFVANCTLQFQELLRTAGTSDTFEGWVDLEPEGKVFVVITLTGSFTEATLQRDRIFKHFTRKRQRAMRRRVHQVNGHKFMATYLRQPTYCSHCREFIWGVFGKQGYQCQVCTCVVHKRCHHLIVTACTCQNNINKVDAKIAEQRFGINIPHKFNVHNYKVPTFCDHCGSLLWGIMRQGLQCKICKMNVHIRCQANVAPNCGVNAVELAKTLAGMGLQPGNISPTSKLISRSTLRRQGKEGSKEGNGIGVNSSSRFGIDNFEFIRVLGKGSFGKVMLARIKETGELYAVKVLKKDVILQDDDVECTMTEKRILSLARNHPFLTQLFCCFQTPDRLFFVMEFVNGGDLMFHIQKSRRFDEARARFYAAEIISALMFLHEKGIIYRDLKLDNVLLDHEGHCKLADFGMCKEGICNGVTTATFCGTPDYIAPEILQEMLYGPAVDWWAMGVLLYEMLCGHAPFEAENEDDLFEAILNDEVVYPTWLHEDATGILKSFMTKNPTMRLGSLTQGGEHEILRHPFFKEIDWVQLNHRQLEPPFRPRIKSREDVSNFDPDFIKEEPVLTPIDEGHLPMINQDEFRNFSYVSPELQP.

The C2 domain occupies Met-1 to Phe-118. 2 positions are modified to phosphoserine: Ser-28 and Ser-32. Phorbol-ester/DAG-type zinc fingers lie at residues Gly-171–Cys-222 and Pro-245–Cys-295. Ser-317 carries the post-translational modification Phosphoserine. A Protein kinase domain is found at Phe-355–Phe-614. Residues Leu-361–Val-369 and Lys-384 each bind ATP. The active-site Proton acceptor is the Asp-479. The residue at position 513 (Thr-513) is a Phosphothreonine; by PDPK1. Residues Lys-615–Pro-683 form the AGC-kinase C-terminal domain. Phosphothreonine is present on Thr-656. Position 675 is a phosphoserine (Ser-675).

It belongs to the protein kinase superfamily. AGC Ser/Thr protein kinase family. PKC subfamily. Interacts with FYN. Interacts with RALA. Interacts with DGKQ.

It localises to the cytoplasm. It carries out the reaction L-seryl-[protein] + ATP = O-phospho-L-seryl-[protein] + ADP + H(+). The enzyme catalyses L-threonyl-[protein] + ATP = O-phospho-L-threonyl-[protein] + ADP + H(+). Novel PKCs (PRKCD, PRKCE, PRKCH and PRKCQ) are calcium-insensitive, but activated by diacylglycerol (DAG) and phosphatidylserine. Three specific sites; Thr-513 (activation loop of the kinase domain), Thr-656 (turn motif) and Ser-675 (hydrophobic region), need to be phosphorylated for its full activation. In terms of biological role, calcium-independent, phospholipid- and diacylglycerol (DAG)-dependent serine/threonine-protein kinase that is involved in the regulation of cell differentiation in keratinocytes and pre-B cell receptor, mediates regulation of epithelial tight junction integrity and foam cell formation, and is required for glioblastoma proliferation and apoptosis prevention in MCF-7 cells. In keratinocytes, binds and activates the tyrosine kinase FYN, which in turn blocks epidermal growth factor receptor (EGFR) signaling and leads to keratinocyte growth arrest and differentiation. Associates with the cyclin CCNE1-CDK2-CDKN1B complex and inhibits CDK2 kinase activity, leading to RB1 dephosphorylation and thereby G1 arrest in keratinocytes. In association with RALA activates actin depolymerization, which is necessary for keratinocyte differentiation. In the pre-B cell receptor signaling, functions downstream of BLNK by up-regulating IRF4, which in turn activates L chain gene rearrangement. Regulates epithelial tight junctions (TJs) by phosphorylating occludin (OCLN) on threonine residues, which is necessary for the assembly and maintenance of TJs. In association with PLD2 and via TLR4 signaling, is involved in lipopolysaccharide (LPS)-induced RGS2 down-regulation and foam cell formation. Upon PMA stimulation, mediates glioblastoma cell proliferation by activating the mTOR pathway, the PI3K/AKT pathway and the ERK1-dependent phosphorylation of ELK1. Involved in the protection of glioblastoma cells from irradiation-induced apoptosis by preventing caspase-9 activation. In camptothecin-treated MCF-7 cells, regulates NF-kappa-B upstream signaling by activating IKBKB, and confers protection against DNA damage-induced apoptosis. Promotes oncogenic functions of ATF2 in the nucleus while blocking its apoptotic function at mitochondria. Phosphorylates ATF2 which promotes its nuclear retention and transcriptional activity and negatively regulates its mitochondrial localization. The polypeptide is Protein kinase C eta type (Prkch) (Rattus norvegicus (Rat)).